The primary structure comprises 320 residues: Mitochondrial thiamine pyrophosphate carrier (320 aa).

Solcar repeat units follow at residues 13–106 (NTKF…LTEL), 116–202 (REFS…LKHL), and 214–309 (NENL…FCNV). A helical transmembrane segment spans residues 19–39 (AVAGSVSGLVTRALISPFDVI). A Phosphoserine modification is found at S51. The next 4 helical transmembrane spans lie at 87-107 (ILSIGYGAVQFLSFEMLTELV), 122-142 (FVCGGLAACMATLTVHPVDVL), 173-193 (VFYKGLAPTLIAIFPYAGLQF), and 220-240 (LLCGSGAGVISKTLTYPLDLF). A Substrate recognition motif is present at residues 241 to 246 (KKRLQV). The chain crosses the membrane as a helical span at residues 293–313 (ALSTGFMFFWYEFFCNVFHCM).

This sequence belongs to the mitochondrial carrier (TC 2.A.29) family.

Its subcellular location is the mitochondrion membrane. The catalysed reaction is thiamine phosphate(out) + thiamine diphosphate(in) = thiamine phosphate(in) + thiamine diphosphate(out). Functionally, mitochondrial transporter mediating uptake of thiamine diphosphate into mitochondria. It is not clear if the antiporter activity is affected by the membrane potential or by the proton electrochemical gradient. This chain is Mitochondrial thiamine pyrophosphate carrier (SLC25A19), found in Pongo abelii (Sumatran orangutan).